A 423-amino-acid polypeptide reads, in one-letter code: Transcription factor bHLH14 (423 aa).

A disordered region spans residues 192–243; that stretch reads GKTTKHTNQTGSYPKPAVSDHSKSGNQQFGSERKRRRKLETTRVAAATKEKH. The bHLH domain maps to 245–294; it reads PAVLSHVEAEKQRREKLNHRFYALRAIVPKVSRMDKASLLSDAVSYIESL. A disordered region spans residues 312 to 343; that stretch reads ETDKLDNSSSNTSPSSVEYQVNQKPSKSNRGS. The span at 318–327 shows a compositional bias: low complexity; it reads NSSSNTSPSS. The span at 328–342 shows a compositional bias: polar residues; that stretch reads VEYQVNQKPSKSNRG.

As to quaternary structure, homodimer.

It localises to the nucleus. The protein is Transcription factor bHLH14 (BHLH14) of Arabidopsis thaliana (Mouse-ear cress).